The sequence spans 383 residues: 8-amino-7-oxononanoate synthase (383 aa).

Position 21 (R21) interacts with substrate. G108–Y109 is a pyridoxal 5'-phosphate binding site. Residue H133 coordinates substrate. S179, H207, and T233 together coordinate pyridoxal 5'-phosphate. K236 is subject to N6-(pyridoxal phosphate)lysine. Position 350 (T350) interacts with substrate.

This sequence belongs to the class-II pyridoxal-phosphate-dependent aminotransferase family. BioF subfamily. Homodimer. Pyridoxal 5'-phosphate is required as a cofactor.

The catalysed reaction is 6-carboxyhexanoyl-[ACP] + L-alanine + H(+) = (8S)-8-amino-7-oxononanoate + holo-[ACP] + CO2. The protein operates within cofactor biosynthesis; biotin biosynthesis. Functionally, catalyzes the decarboxylative condensation of pimeloyl-[acyl-carrier protein] and L-alanine to produce 8-amino-7-oxononanoate (AON), [acyl-carrier protein], and carbon dioxide. The protein is 8-amino-7-oxononanoate synthase of Photorhabdus laumondii subsp. laumondii (strain DSM 15139 / CIP 105565 / TT01) (Photorhabdus luminescens subsp. laumondii).